A 518-amino-acid polypeptide reads, in one-letter code: Ribonuclease Y (518 aa).

Residues Val-2–Ile-22 form a helical membrane-spanning segment. The disordered stretch occupies residues Gln-91–Ala-119. The 61-residue stretch at Thr-208–Leu-268 folds into the KH domain. Positions Val-334–Ala-427 constitute an HD domain.

The protein belongs to the RNase Y family.

It is found in the cell membrane. Its function is as follows. Endoribonuclease that initiates mRNA decay. This is Ribonuclease Y from Enterococcus faecalis (strain ATCC 700802 / V583).